The chain runs to 245 residues: tRNA (guanine-N(7)-)-methyltransferase (245 aa).

S-adenosyl-L-methionine is bound by residues Gly-70, 93-94 (EI), 126-127 (NA), and Leu-146. The active site involves Asp-149. An S-adenosyl-L-methionine-binding site is contributed by 224–226 (SEE).

It belongs to the class I-like SAM-binding methyltransferase superfamily. TrmB family.

It localises to the nucleus. It carries out the reaction guanosine(46) in tRNA + S-adenosyl-L-methionine = N(7)-methylguanosine(46) in tRNA + S-adenosyl-L-homocysteine. The protein operates within tRNA modification; N(7)-methylguanine-tRNA biosynthesis. Its function is as follows. Catalyzes the formation of N(7)-methylguanine at position 46 (m7G46) in tRNA. This is tRNA (guanine-N(7)-)-methyltransferase from Aedes aegypti (Yellowfever mosquito).